The following is a 2378-amino-acid chain: Serine/threonine-protein kinase ATM (2378 aa).

In terms of domain architecture, FAT spans 1415-1937; it reads LSARKRNTMM…LHTILMYDDE (523 aa). Positions 2044–2366 constitute a PI3K/PI4K catalytic domain; that stretch reads WKDVFTIADG…LLREATSADN (323 aa). The segment at 2050 to 2056 is G-loop; it reads IADGIST. The tract at residues 2218–2226 is catalytic loop; it reads GLGDRHASN. The segment at 2238–2263 is activation loop; sequence HIDLGMILEYSKRTLPVPEQVPFRIT. In terms of domain architecture, FATC spans 2346–2378; it reads TAQSSNLQIRRLLREATSADNLSRMFCGWMPFL.

Belongs to the PI3/PI4-kinase family. ATM subfamily.

It localises to the nucleus. The enzyme catalyses L-seryl-[protein] + ATP = O-phospho-L-seryl-[protein] + ADP + H(+). It carries out the reaction L-threonyl-[protein] + ATP = O-phospho-L-threonyl-[protein] + ADP + H(+). Functionally, serine/threonine protein kinase which activates checkpoint signaling in the presence of DNA double strand breaks (DSBs) and other forms of DNA damage induced by ionizing radiation and other genotoxic stresses such as UV. Plays a role in maintaining genome stability. This Caenorhabditis elegans protein is Serine/threonine-protein kinase ATM (atm-1).